Here is an 85-residue protein sequence, read N- to C-terminus: Senescence-associated and QQS-related protein (85 aa).

Positions 1–24 (MSFRKVEKKPTEMGRNMTHEKSDS) are enriched in basic and acidic residues. 2 disordered regions span residues 1–35 (MSFR…PMTV) and 55–85 (SGKA…FPNY). The span at 58-77 (ARSNYNLTGTAKGTGPINSF) shows a compositional bias: polar residues.

As to expression, expressed predominantly within leaves and cotyledons vasculatures. Mainly observed in fully expanded leaves, at the base of mature inflorescences, in senescing leaves and cauline leaves, and, to a lower extent, in hypocotyls and rosette leaves prior to flowering.

Plays a role in carbon allocation, including during senescence and stresses, thus impacting starch accumulation. This is Senescence-associated and QQS-related protein from Arabidopsis thaliana (Mouse-ear cress).